A 73-amino-acid polypeptide reads, in one-letter code: Large ribosomal subunit protein bL31 (73 aa).

Zn(2+) contacts are provided by C16, C18, C37, and C40.

This sequence belongs to the bacterial ribosomal protein bL31 family. Type A subfamily. Part of the 50S ribosomal subunit. Requires Zn(2+) as cofactor.

Its function is as follows. Binds the 23S rRNA. The chain is Large ribosomal subunit protein bL31 from Pseudomonas syringae pv. syringae (strain B728a).